A 954-amino-acid chain; its full sequence is MAAEPRRVSFRDGRLASRKAEEAALRRHQAATWLESVIGPFGLSRCPSEQEFVAAVRNGIVLCKAINKIQPGAVPKVVANASCDSQPSTAFQYFENIRNFLVAVQELKLPCFEASDLEKDNIDAGSVGKIVDCVISLKSYHEWRQRGGSYGHLKHLKSPLATRSASHVQSEYVCSGSSSTPKRLDLVETDTERQPNQNVGPNCQEAMERLQKVILDCMISCKENLDNDSLKKDPYKLVGTILSRQLEKEQSSNSQVENRRRLLQAQESELLELKSMFQEVKIDFRTLKTQFQDDIIKLGDNVQGLSKAALGYNQAVKENKSLYNLLQELRGNIRVFCRIRPLINSESISSIEHIGNDGSIMVCDPLKPQTTRKIFQFNKIFGPTTTQDEVYKETQYLIRSVMDGYNVCIFAYGQTGSGKTHTMCGPSGGLSSQDLGISYMALNDLFKTSTSREDVKYDIHVQMVEIYNEQVRDLLNEDTSNIRTSSNGLLNLPDAKKCPVQSPSDVINLMLLGEKHRASSPTAMNHRSSRSHSILTVHVNGKDMSGNVTRSSLHLVDLAGSERVDRSEATGDRLKEAQHINKSLSCLGDVITALAQKNSHIPYRNSKLTQLLQSSLGGNAKTLMFAHISPEADSYVETLSTLKFAQRASCVELGTAHANKESNEIRELKEQVENLKRALAAKELEKSSFKLKENTVVRERAKQVPERTPPRPRRLSLENTGIGKGSIPDRKGPKSPLSVTKLNRDHATIHDSIDGFNHHIMHQGSVMQMSATSSEDPVREETEKIITTVDTVPFCGLHPDAYISSKQSGLDTLLRTPCRSRNLNLEVGQTDEPSSSAKLEKMTSSNATKKGSHLRKSIQSSIGKLIHGSERRNVQHLGQATPAKIANSTNNDVPSSITPDLRLRRRQSLTGLPPPPSTMSRRSSLGGKSDIGSDKRGAKTPPPVNSAAKAKRWL.

Residues 24-142 (ALRRHQAATW…CVISLKSYHE (119 aa)) enclose the Calponin-homology (CH) domain. Residues 242 to 293 (LSRQLEKEQSSNSQVENRRRLLQAQESELLELKSMFQEVKIDFRTLKTQFQD) are a coiled coil. Residues 332–651 (NIRVFCRIRP…LKFAQRASCV (320 aa)) enclose the Kinesin motor domain. Position 413-420 (413-420 (GQTGSGKT)) interacts with ATP. The stretch at 656-692 (AHANKESNEIRELKEQVENLKRALAAKELEKSSFKLK) forms a coiled coil. Over residues 697–709 (VRERAKQVPERTP) the composition is skewed to basic and acidic residues. Disordered stretches follow at residues 697–743 (VRER…TKLN), 824–858 (NLEVGQTDEPSSSAKLEKMTSSNATKKGSHLRKSI), and 882–954 (PAKI…KRWL). Composition is skewed to polar residues over residues 831 to 849 (DEPSSSAKLEKMTSSNATK) and 886 to 898 (ANSTNNDVPSSIT).

The protein belongs to the TRAFAC class myosin-kinesin ATPase superfamily. Kinesin family. KIN-14 subfamily.

The chain is Kinesin-like protein KIN-14A from Oryza sativa subsp. japonica (Rice).